A 262-amino-acid polypeptide reads, in one-letter code: [LysW]-aminoadipate/[LysW]-glutamate kinase (262 aa).

Residues 35-36 (GG), R62, and N167 contribute to the substrate site.

Belongs to the acetylglutamate kinase family. LysZ subfamily.

Its subcellular location is the cytoplasm. The catalysed reaction is [amino-group carrier protein]-C-terminal-N-(1,4-dicarboxybutan-1-yl)-L-glutamine + ATP = [amino-group carrier protein]-C-terminal-N-(1-carboxy-5-phosphooxy-5-oxopentan-1-yl)-L-glutamine + ADP. It catalyses the reaction [amino-group carrier protein]-C-terminal-gamma-(L-glutamyl)-L-glutamate + ATP = [amino-group carrier protein]-C-terminal-gamma-(5-phospho-L-glutamyl)-L-glutamate + ADP. The protein operates within amino-acid biosynthesis; L-lysine biosynthesis via AAA pathway; L-lysine from L-alpha-aminoadipate (Thermus route): step 2/5. It participates in amino-acid biosynthesis; L-arginine biosynthesis. In terms of biological role, involved in both the arginine and lysine biosynthetic pathways. Phosphorylates the LysW-bound precursors glutamate (for arginine biosynthesis), respectively alpha-aminoadipate (for lysine biosynthesis). The chain is [LysW]-aminoadipate/[LysW]-glutamate kinase from Metallosphaera sedula (strain ATCC 51363 / DSM 5348 / JCM 9185 / NBRC 15509 / TH2).